The primary structure comprises 267 residues: Large ribosomal subunit protein bL9m (267 aa).

The N-terminal 52 residues, 1 to 52 (MAALVVTEPGRALLRAGTERLLRGGIQELLRPRHEGNSPGLARDFSLSQNRG), are a transit peptide targeting the mitochondrion.

Belongs to the bacterial ribosomal protein bL9 family. Component of the mitochondrial ribosome large subunit (39S) which comprises a 16S rRNA and about 50 distinct proteins.

Its subcellular location is the mitochondrion. The chain is Large ribosomal subunit protein bL9m (MRPL9) from Papio anubis (Olive baboon).